The chain runs to 413 residues: Cell division protein FtsZ 2 (413 aa).

GTP contacts are provided by residues 130 to 132, Glu169, Arg173, and Asp216; that span reads GTG.

This sequence belongs to the FtsZ family. Homodimer. Polymerizes to form a dynamic ring structure in a strictly GTP-dependent manner. Interacts directly with several other division proteins.

The protein localises to the cytoplasm. Essential cell division protein that forms a contractile ring structure (Z ring) at the future cell division site. The regulation of the ring assembly controls the timing and the location of cell division. One of the functions of the FtsZ ring is to recruit other cell division proteins to the septum to produce a new cell wall between the dividing cells. Binds GTP and shows GTPase activity. The polypeptide is Cell division protein FtsZ 2 (Pyrococcus abyssi (strain GE5 / Orsay)).